The following is a 197-amino-acid chain: Recombination protein RecR (197 aa).

A C4-type zinc finger spans residues 57–72; sequence CSVCFAITEDDPCWIC. In terms of domain architecture, Toprim spans 79–174; it reads GTICVVEEPQ…KVTRLAHGIP (96 aa).

Belongs to the RecR family.

Functionally, may play a role in DNA repair. It seems to be involved in an RecBC-independent recombinational process of DNA repair. It may act with RecF and RecO. The chain is Recombination protein RecR from Geobacter sp. (strain M21).